The sequence spans 31 residues: GSIPACGESCFKGKCYTPGCSCSKYPLCAKN.

Residues 1–31 (GSIPACGESCFKGKCYTPGCSCSKYPLCAKN) constitute a cross-link (cyclopeptide (Gly-Asn)). 3 disulfide bridges follow: cysteine 6–cysteine 20, cysteine 10–cysteine 22, and cysteine 15–cysteine 28.

In terms of processing, this is a cyclic peptide. In terms of tissue distribution, expressed in leaves and petioles but not in petals, roots and runners (at protein level).

Functionally, probably participates in a plant defense mechanism. Has hemolytic activity. The protein is Cycloviolacin-O14 of Viola odorata (Sweet violet).